A 505-amino-acid chain; its full sequence is Argininosuccinate lyase (505 aa).

It belongs to the lyase 1 family. Argininosuccinate lyase subfamily.

The protein localises to the cytoplasm. It catalyses the reaction 2-(N(omega)-L-arginino)succinate = fumarate + L-arginine. Its pathway is amino-acid biosynthesis; L-arginine biosynthesis; L-arginine from L-ornithine and carbamoyl phosphate: step 3/3. This chain is Argininosuccinate lyase, found in Rhodococcoides fascians (Rhodococcus fascians).